The following is an 83-amino-acid chain: uncharacterized protein (83 aa).

This is an uncharacterized protein from Rickettsia conorii (strain ATCC VR-613 / Malish 7).